Here is a 238-residue protein sequence, read N- to C-terminus: Chloride intracellular channel exl-1 (238 aa).

The protein belongs to the chloride channel CLIC family. In terms of tissue distribution, expressed in the intestine, neurons and muscles.

The protein localises to the cytoplasm. It localises to the membrane. It is found in the lysosome membrane. The protein resides in the golgi apparatus membrane. Functionally, probable chloride channel. This chain is Chloride intracellular channel exl-1 (exl-1), found in Caenorhabditis elegans.